Consider the following 635-residue polypeptide: Probable Xaa-Pro aminopeptidase P (635 aa).

Positions 432, 443, 541, and 555 each coordinate Mn(2+).

It belongs to the peptidase M24B family. It depends on Mn(2+) as a cofactor.

The enzyme catalyses Release of any N-terminal amino acid, including proline, that is linked to proline, even from a dipeptide or tripeptide.. Functionally, catalyzes the removal of a penultimate prolyl residue from the N-termini of peptides. This Arthroderma gypseum (strain ATCC MYA-4604 / CBS 118893) (Microsporum gypseum) protein is Probable Xaa-Pro aminopeptidase P (AMPP).